Reading from the N-terminus, the 344-residue chain is Putative NAD(P)H nitroreductase MT3217 (344 aa).

FMN contacts are provided by residues 40–44 (QPWRW) and arginine 326.

It belongs to the nitroreductase family. Interacts with human TLR2. FMN is required as a cofactor.

Functionally, stimulates pro-inflammatory cytokine expression via TLR2 signaling pathway. Activation of TLR2 results in the phosphorylation and activation of NF-kappa-B. Also induces TLR2 expression. May influence the innate immune responses to facilitate the survival of M.tuberculosis in the granulomatous microenvironment. The protein is Putative NAD(P)H nitroreductase MT3217 of Mycobacterium tuberculosis (strain CDC 1551 / Oshkosh).